Reading from the N-terminus, the 83-residue chain is Exodeoxyribonuclease 7 small subunit (83 aa).

Belongs to the XseB family. In terms of assembly, heterooligomer composed of large and small subunits.

It is found in the cytoplasm. It carries out the reaction Exonucleolytic cleavage in either 5'- to 3'- or 3'- to 5'-direction to yield nucleoside 5'-phosphates.. Its function is as follows. Bidirectionally degrades single-stranded DNA into large acid-insoluble oligonucleotides, which are then degraded further into small acid-soluble oligonucleotides. The polypeptide is Exodeoxyribonuclease 7 small subunit (Mesorhizobium japonicum (strain LMG 29417 / CECT 9101 / MAFF 303099) (Mesorhizobium loti (strain MAFF 303099))).